The chain runs to 676 residues: Beta-galactosidase BgaP (676 aa).

Arg-112 serves as a coordination point for substrate. Cys-116 serves as a coordination point for Zn(2+). Asn-150 serves as a coordination point for substrate. Glu-151 acts as the Proton donor in catalysis. Zn(2+)-binding residues include Cys-156, Cys-158, and Cys-161. Glu-308 (nucleophile) is an active-site residue. Substrate contacts are provided by residues Trp-316 and 356–359 (EKYH).

The protein belongs to the glycosyl hydrolase 42 family. In terms of assembly, homodimer.

The catalysed reaction is Hydrolysis of terminal non-reducing beta-D-galactose residues in beta-D-galactosides.. Its activity is regulated as follows. No activity lost during treatment with 100 mM EDTA after 2 hours, and the addition of 1 mM MgCl(2), 1 mM CaCl(2) or 1 mM MnCl(2) has no effect. However, the enzyme activity is inhibited by Zn(2+), Cu(2+), Ni(2+) and Co(2+) to different extents. Addition of Na(+) or K(+) slightly stimulates the enzyme activity at low concentrations and the optimal concentration is 250 mM. A further increase of their concentration of ions above the optimum value results in a decrease in enzyme activity. The enzyme is still active even in the presence of Na(+) or K(+) at a concentration up to 5 M. Functionally, hydrolyzes lactose, o-nitrophenyl-beta-D-galactopyranoside (ONPG), p-nitrophenyl-beta-D-galactopyranoside (PNPG), 5-bromo-4-chloro-3-indolyl-beta-D-galactopyranoside (X-gal), o-nitrophenyl-beta-D-fucopyranoside, p-nitrophenyl-beta-D-mannoside, o-nitrophenyl-beta-D-glucoside, p-nitrophenyl-beta-D-xyloside, p-nitrophenyl-beta-D-cellobioside, p-nitrophenyl-beta-D-arabinoside, p-nitrophenyl-beta-D-lactoside, p-nitrophenyl-beta-D-galacturonide, p-nitrophenyl-beta-D-glucuronide and p-nitrophenyl-alpha-D-galactoside with highest level of activity with ONPG as substrate, intermediate level of activity with PNPG and lower levels of activity with all other chromogenic nitrophenyl analogs. Able to hydrolyze 34% of milk lactose after 60 minutes at 5 degrees Celsius. This is Beta-galactosidase BgaP from Planococcus sp. (strain L4).